The primary structure comprises 275 residues: tRNA pseudouridine synthase A (275 aa).

Catalysis depends on D60, which acts as the Nucleophile. Position 119 (Y119) interacts with substrate.

It belongs to the tRNA pseudouridine synthase TruA family. As to quaternary structure, homodimer.

It carries out the reaction uridine(38/39/40) in tRNA = pseudouridine(38/39/40) in tRNA. Formation of pseudouridine at positions 38, 39 and 40 in the anticodon stem and loop of transfer RNAs. In Synechocystis sp. (strain ATCC 27184 / PCC 6803 / Kazusa), this protein is tRNA pseudouridine synthase A.